A 104-amino-acid polypeptide reads, in one-letter code: L-rhamnose mutarotase (104 aa).

Tyrosine 18 provides a ligand contact to substrate. Residue histidine 22 is the Proton donor of the active site. Substrate contacts are provided by residues tyrosine 41 and tryptophan 76 to tryptophan 77.

Belongs to the rhamnose mutarotase family. As to quaternary structure, homodimer.

The protein resides in the cytoplasm. It carries out the reaction alpha-L-rhamnose = beta-L-rhamnose. Its pathway is carbohydrate metabolism; L-rhamnose metabolism. Its function is as follows. L-rhamnose mutarotase involved in ulvan degradation. Ulvan is the main polysaccharide component of the Ulvales (green seaweed) cell wall. It is composed of disaccharide building blocks comprising 3-sulfated rhamnose (Rha3S) linked to D-glucuronic acid (GlcA), L-iduronic acid (IduA), or D-xylose (Xyl). L-rhamnose mutarotase catalyzes the anomeric conversion of alpha- to beta-L-rhamnose. In Formosa agariphila (strain DSM 15362 / KCTC 12365 / LMG 23005 / KMM 3901 / M-2Alg 35-1), this protein is L-rhamnose mutarotase (rhaM).